The sequence spans 485 residues: MTDIINKLQAFADANPQSIAVRHTTDELTYQQLMDESSKLAHRLQGSKKPMILFGHMSPYMIVGMIGAIKAGCGYVPVDTSIPEDRIKMIINKVQPEFVFNTTDESFESLAGEVFTIEDIKTSQDPVIFDSQIKDNDTVYTIFTSGSTGEPKGVQIEYASLVQFTEWMLELNKSGNEQQWLNQAPFSFDLSVMAIYPCLASGGTLNLVDKNMINKPKLLNEMLTATPINIWVSTPSFMEMCLLLPTLNEEQYGSLNEFFFCGEILPHRAAKALVSRFPSATIYNTYGPTEATVAVTSIQITQEILDQYPTLPVGVERPGARLSTTDEGELVIEGQSVSLGYLKNDQKTAEVFNFDDGIRTYHTGDKAKFENGQWFIQGRIDFQIKLNGYRMELEEIETQLRQSEFVKEAIVVPVYKNDKVIHLIGAIVPTTEVTDNAEMTKNIKNDLKSRLPEYMIPRKFEWMEQLPLTSNGKIDRKKIAEVING.

144–145 (TS) serves as a coordination point for ATP. Asp189 is a D-alanine binding site. 284–289 (NTYGPT) contacts ATP. Val293 contributes to the D-alanine binding site. ATP is bound by residues Asp365 and Lys473. Residue Lys473 coordinates D-alanine.

It belongs to the ATP-dependent AMP-binding enzyme family. DltA subfamily.

Its subcellular location is the cytoplasm. It carries out the reaction holo-[D-alanyl-carrier protein] + D-alanine + ATP = D-alanyl-[D-alanyl-carrier protein] + AMP + diphosphate. It participates in cell wall biogenesis; lipoteichoic acid biosynthesis. Functionally, catalyzes the first step in the D-alanylation of lipoteichoic acid (LTA), the activation of D-alanine and its transfer onto the D-alanyl carrier protein (Dcp) DltC. In an ATP-dependent two-step reaction, forms a high energy D-alanyl-AMP intermediate, followed by transfer of the D-alanyl residue as a thiol ester to the phosphopantheinyl prosthetic group of the Dcp. D-alanylation of LTA plays an important role in modulating the properties of the cell wall in Gram-positive bacteria, influencing the net charge of the cell wall. This chain is D-alanine--D-alanyl carrier protein ligase, found in Staphylococcus aureus (strain MRSA252).